We begin with the raw amino-acid sequence, 373 residues long: Chaperone protein DnaJ (373 aa).

The J domain occupies 4–68; sequence NYYQILGVSK…QTRAAYDRLG (65 aa). The CR-type zinc-finger motif lies at 136-214; it reads GIEKNISFSS…CHGMGRYHKQ (79 aa). Zn(2+)-binding residues include cysteine 149, cysteine 152, cysteine 166, cysteine 169, cysteine 188, cysteine 191, cysteine 202, and cysteine 205. 4 CXXCXGXG motif repeats span residues 149-156, 166-173, 188-195, and 202-209; these read CDTCHGSG, CDACSGVG, CHKCQGNG, and CKKCHGMG.

This sequence belongs to the DnaJ family. In terms of assembly, homodimer. The cofactor is Zn(2+).

The protein localises to the cytoplasm. In terms of biological role, participates actively in the response to hyperosmotic and heat shock by preventing the aggregation of stress-denatured proteins and by disaggregating proteins, also in an autonomous, DnaK-independent fashion. Unfolded proteins bind initially to DnaJ; upon interaction with the DnaJ-bound protein, DnaK hydrolyzes its bound ATP, resulting in the formation of a stable complex. GrpE releases ADP from DnaK; ATP binding to DnaK triggers the release of the substrate protein, thus completing the reaction cycle. Several rounds of ATP-dependent interactions between DnaJ, DnaK and GrpE are required for fully efficient folding. Also involved, together with DnaK and GrpE, in the DNA replication of plasmids through activation of initiation proteins. This chain is Chaperone protein DnaJ, found in Rickettsia peacockii (strain Rustic).